The following is a 177-amino-acid chain: FMRFamide-related peptides (177 aa).

A signal peptide spans 1 to 21 (MNHPRSIAMLAALWLVVSVTS). Residues 22–32 (TPVRRSPDLEA) constitute a propeptide that is removed on maturation. F45 carries the phenylalanine amide modification. Positions 47 to 93 (RSTLPVVPPAQPSFLQRYSAPQPAALTADDLMTFLRAYEEDYSSPVS) are excised as a propeptide. Residues F102 and F111 each carry the phenylalanine amide modification. Residues 113-131 (RSVDEENSGYQAETNTYPQ) constitute a propeptide that is removed on maturation. The residue at position 143 (L143) is a Leucine amide. The propeptide occupies 145–177 (RDNELSESNDEDRYEVESERTKRSVVDPCNDCA). The disordered stretch occupies residues 145-177 (RDNELSESNDEDRYEVESERTKRSVVDPCNDCA). Positions 149-158 (LSESNDEDRY) are enriched in acidic residues. The segment covering 159–169 (EVESERTKRSV) has biased composition (basic and acidic residues).

This sequence belongs to the FARP (FMRFamide related peptide) family. As to expression, only expressed in the CNS and predominantly in the thoracic ganglia. Strongest expression is seen in two pairs of large neurons in each thoracic ganglion. These neurons are ventrolateral neurosecretory cells 1 and 2, they project their axons through transverse nerves into the periphery where axons from the prothoracic ganglion innervate the prothoracic gland.

It localises to the secreted. Regulates ecdysteroidogenesis by direct innervation of the prothoracic gland by reducing cAMP production via the receptor for myosuppressin. The neurons that innervate the prothoracic gland during the fifth instar are most active during days 0-4, after which they reduce and then peak again on day 6. Expression suppresses the biosynthesis of steroid hormones called ecdysteroids that elicit molting and metamorphosis. The chain is FMRFamide-related peptides from Bombyx mori (Silk moth).